We begin with the raw amino-acid sequence, 710 residues long: Integrator complex subunit 10 (710 aa).

Phosphoserine is present on residues serine 231, serine 381, and serine 382. Residue lysine 464 forms a Glycyl lysine isopeptide (Lys-Gly) (interchain with G-Cter in SUMO2) linkage.

It belongs to the Integrator subunit 10 family. In terms of assembly, component of the Integrator complex, composed of core subunits INTS1, INTS2, INTS3, INTS4, INTS5, INTS6, INTS7, INTS8, INTS9/RC74, INTS10, INTS11/CPSF3L, INTS12, INTS13, INTS14 and INTS15. The core complex associates with protein phosphatase 2A subunits PPP2CA and PPP2R1A, to form the Integrator-PP2A (INTAC) complex. INTS10 is part of the tail subcomplex, composed of INTS10, INTS13, INTS14 and INTS15.

Its subcellular location is the nucleus. Functionally, component of the integrator complex, a multiprotein complex that terminates RNA polymerase II (Pol II) transcription in the promoter-proximal region of genes. The integrator complex provides a quality checkpoint during transcription elongation by driving premature transcription termination of transcripts that are unfavorably configured for transcriptional elongation: the complex terminates transcription by (1) catalyzing dephosphorylation of the C-terminal domain (CTD) of Pol II subunit POLR2A/RPB1 and SUPT5H/SPT5, (2) degrading the exiting nascent RNA transcript via endonuclease activity and (3) promoting the release of Pol II from bound DNA. The integrator complex is also involved in terminating the synthesis of non-coding Pol II transcripts, such as enhancer RNAs (eRNAs), small nuclear RNAs (snRNAs), telomerase RNAs and long non-coding RNAs (lncRNAs). Within the integrator complex, INTS10 is part of the integrator tail module that acts as a platform for the recruitment of transcription factors at promoters. May be not involved in the recruitment of cytoplasmic dynein to the nuclear envelope, probably as component of the integrator complex. This is Integrator complex subunit 10 from Homo sapiens (Human).